A 349-amino-acid polypeptide reads, in one-letter code: tRNA pseudouridine synthase D (349 aa).

A disordered region spans residues Met1 to Pro22. Asp78 acts as the Nucleophile in catalysis. The 155-residue stretch at Gly150 to Leu304 folds into the TRUD domain.

The protein belongs to the pseudouridine synthase TruD family.

The enzyme catalyses uridine(13) in tRNA = pseudouridine(13) in tRNA. Its function is as follows. Responsible for synthesis of pseudouridine from uracil-13 in transfer RNAs. This chain is tRNA pseudouridine synthase D, found in Anaeromyxobacter sp. (strain Fw109-5).